Consider the following 321-residue polypeptide: MIRAAIKGSGSALPRKVVTNEELAARVDTSDEWIVERTGIRQRYIAGADEFTSTLAMEASRKALEAAGITPETIDLIVLATATPDNTFPATATKVQEALGCNGCIAFDVQAVCSGFLYALATADSLLKTGMAKRALVIGAETFSRILDWEDRTTCVLFGDGAGAVVLEAAEGDTEAPGILASRLHADGAQHDLLYVDGGPSTTQTVGHLRMRGREVFRHAVVNLADVLKEVLDDAGVSASDIDWVVPHQANARILDATARKLGLPMEKIVVTVDRHANTSAASVPLAFDTAVRDGRIKPGDLVMFEAMGGGFTWGASLVRY.

Catalysis depends on residues Cys-113 and His-248. The segment at 249 to 253 (QANAR) is ACP-binding. Asn-278 is a catalytic residue.

Belongs to the thiolase-like superfamily. FabH family. Homodimer.

The protein resides in the cytoplasm. It carries out the reaction malonyl-[ACP] + acetyl-CoA + H(+) = 3-oxobutanoyl-[ACP] + CO2 + CoA. It functions in the pathway lipid metabolism; fatty acid biosynthesis. Its function is as follows. Catalyzes the condensation reaction of fatty acid synthesis by the addition to an acyl acceptor of two carbons from malonyl-ACP. Catalyzes the first condensation reaction which initiates fatty acid synthesis and may therefore play a role in governing the total rate of fatty acid production. Possesses both acetoacetyl-ACP synthase and acetyl transacylase activities. Its substrate specificity determines the biosynthesis of branched-chain and/or straight-chain of fatty acids. The sequence is that of Beta-ketoacyl-[acyl-carrier-protein] synthase III from Erythrobacter litoralis (strain HTCC2594).